Reading from the N-terminus, the 259-residue chain is Ribosomal RNA small subunit methyltransferase J (259 aa).

S-adenosyl-L-methionine contacts are provided by residues 101 to 102 (RD), 117 to 118 (ER), 153 to 154 (SS), and Asp176.

This sequence belongs to the methyltransferase superfamily. RsmJ family.

It is found in the cytoplasm. The catalysed reaction is guanosine(1516) in 16S rRNA + S-adenosyl-L-methionine = N(2)-methylguanosine(1516) in 16S rRNA + S-adenosyl-L-homocysteine + H(+). Its function is as follows. Specifically methylates the guanosine in position 1516 of 16S rRNA. The sequence is that of Ribosomal RNA small subunit methyltransferase J from Aliivibrio fischeri (strain MJ11) (Vibrio fischeri).